The sequence spans 237 residues: uncharacterized protein (237 aa).

This sequence belongs to the bactofilin family.

This is an uncharacterized protein from Bacillus subtilis (strain 168).